The following is a 432-amino-acid chain: D-amino acid dehydrogenase (432 aa).

FAD is bound at residue 3–17 (VVILGSGVVGVASAW).

The protein belongs to the DadA oxidoreductase family. It depends on FAD as a cofactor.

The enzyme catalyses a D-alpha-amino acid + A + H2O = a 2-oxocarboxylate + AH2 + NH4(+). It functions in the pathway amino-acid degradation; D-alanine degradation; NH(3) and pyruvate from D-alanine: step 1/1. In terms of biological role, oxidative deamination of D-amino acids. The protein is D-amino acid dehydrogenase of Escherichia coli O45:K1 (strain S88 / ExPEC).